Here is a 79-residue protein sequence, read N- to C-terminus: uncharacterized protein (79 aa).

This is an uncharacterized protein from Homo sapiens (Human).